Consider the following 1201-residue polypeptide: Period circadian protein homolog 3 (1201 aa).

The segment at 1 to 50 (MPRGEAPGPGRRGAKDEALGEESGERWSPEFHLQRKLADSSHSEQQDRNR) is disordered. Residues 13–50 (GAKDEALGEESGERWSPEFHLQRKLADSSHSEQQDRNR) show a composition bias toward basic and acidic residues. Residues 55–64 (LIMVVQEMKK) carry the Nuclear export signal 1 motif. PAS domains follow at residues 121-188 (IASE…RAQL) and 262-328 (YEAP…KVLK). A PAC domain is found at 337–380 (HSPIRFCTQNGDYIILDSSWSSFVNPWSRKISFIIGRHKVRTSP). The short motif at 403-412 (LQEQIYKLLL) is the Nuclear export signal 3 element. The interval 555-760 (LKRKCISCTN…SSSNTGSGPR (206 aa)) is CSNK1E binding domain. 2 disordered regions span residues 717 to 788 (YSYF…FPPA) and 881 to 923 (PSMS…RSSS). Over residues 721–731 (QGDSTSKQTRS) the composition is skewed to polar residues. The Nuclear localization signal signature appears at 729-745 (TRSAGCRKGKHKRKKLP). Residues 733-743 (GCRKGKHKRKK) are compositionally biased toward basic residues. Low complexity-rich tracts occupy residues 767 to 783 (AQPC…TSSP) and 881 to 890 (PSMSSAMSPT). Basic and acidic residues predominate over residues 900-911 (QRREEEKWEAQS). A Phosphoserine modification is found at Ser-919. The Nuclear export signal 2 signature appears at 925–932 (LQLNLLQE). Positions 952–1067 (TEYCVTGNNG…GSAASGSSDS (116 aa)) are disordered. 4 stretches are compositionally biased toward polar residues: residues 957–976 (TGNN…STGS), 983–994 (SHPTASALSTGS), 1001–1012 (SHPTASALSTGS), and 1035–1050 (TPSH…GSPP). 5 repeat units span residues 965–982 (SPAT…RENP), 983–1000 (SHPT…MKNP), 1001–1018 (SHPT…MKNP), 1019–1036 (SHPT…SRTP), and 1037–1054 (SHPT…SESP). The segment at 965–1054 (SPATTGALST…STGSPPSESP (90 aa)) is 5 X 18 AA tandem repeats of S-[HP]-[AP]-T-[AT]-[GST]-[ATV]-L-S-[MT]-G-[LS]-P-P-[MRS]-[EKR]-[NST]-P. At Ser-994 the chain carries Phosphoserine. Position 1053 is a phosphoserine (Ser-1053). Low complexity predominate over residues 1053-1067 (SPSRTGSAASGSSDS). The tract at residues 1123-1201 (ERVKEVVLKE…CGQVLVEDSC (79 aa)) is CRY binding domain.

Homodimer. Component of the circadian core oscillator, which includes the CRY proteins, CLOCK or NPAS2, BMAL1 or BMAL2, CSNK1D and/or CSNK1E, TIMELESS and the PER proteins. Interacts directly with PER1, PER2, CRY1, CRY2, and TIMELESS; interaction with CRY1 and CRY2 is weak and not rhythmic. Interacts with FBXW11 and BTRC. Phosphorylation by CSNK1E is weak and appears to require association with PER1 and translocation to the nucleus. In terms of processing, ubiquitinated.

The protein resides in the cytoplasm. It is found in the nucleus. In terms of biological role, originally described as a core component of the circadian clock. The circadian clock, an internal time-keeping system, regulates various physiological processes through the generation of approximately 24 hour circadian rhythms in gene expression, which are translated into rhythms in metabolism and behavior. It is derived from the Latin roots 'circa' (about) and 'diem' (day) and acts as an important regulator of a wide array of physiological functions including metabolism, sleep, body temperature, blood pressure, endocrine, immune, cardiovascular, and renal function. Consists of two major components: the central clock, residing in the suprachiasmatic nucleus (SCN) of the brain, and the peripheral clocks that are present in nearly every tissue and organ system. Both the central and peripheral clocks can be reset by environmental cues, also known as Zeitgebers (German for 'timegivers'). The predominant Zeitgeber for the central clock is light, which is sensed by retina and signals directly to the SCN. The central clock entrains the peripheral clocks through neuronal and hormonal signals, body temperature and feeding-related cues, aligning all clocks with the external light/dark cycle. Circadian rhythms allow an organism to achieve temporal homeostasis with its environment at the molecular level by regulating gene expression to create a peak of protein expression once every 24 hours to control when a particular physiological process is most active with respect to the solar day. Transcription and translation of core clock components (CLOCK, NPAS2, BMAL1, BMAL2, PER1, PER2, PER3, CRY1 and CRY2) plays a critical role in rhythm generation, whereas delays imposed by post-translational modifications (PTMs) are important for determining the period (tau) of the rhythms (tau refers to the period of a rhythm and is the length, in time, of one complete cycle). A diurnal rhythm is synchronized with the day/night cycle, while the ultradian and infradian rhythms have a period shorter and longer than 24 hours, respectively. Disruptions in the circadian rhythms contribute to the pathology of cardiovascular diseases, cancer, metabolic syndromes and aging. A transcription/translation feedback loop (TTFL) forms the core of the molecular circadian clock mechanism. Transcription factors, CLOCK or NPAS2 and BMAL1 or BMAL2, form the positive limb of the feedback loop, act in the form of a heterodimer and activate the transcription of core clock genes and clock-controlled genes (involved in key metabolic processes), harboring E-box elements (5'-CACGTG-3') within their promoters. The core clock genes: PER1/2/3 and CRY1/2 which are transcriptional repressors form the negative limb of the feedback loop and interact with the CLOCK|NPAS2-BMAL1|BMAL2 heterodimer inhibiting its activity and thereby negatively regulating their own expression. This heterodimer also activates nuclear receptors NR1D1, NR1D2, RORA, RORB and RORG, which form a second feedback loop and which activate and repress BMAL1 transcription, respectively. Has a redundant role with the other PER proteins PER1 and PER2 and is not essential for the circadian rhythms maintenance. In contrast, plays an important role in sleep-wake timing and sleep homeostasis probably through the transcriptional regulation of sleep homeostasis-related genes, without influencing circadian parameters. Can bind heme. The chain is Period circadian protein homolog 3 (PER3) from Homo sapiens (Human).